The primary structure comprises 416 residues: 3-oxoacyl-[acyl-carrier-protein] synthase 2 (416 aa).

Positions 6 to 414 (KKRVVVTGLG…GHNVTLAFKK (409 aa)) constitute a Ketosynthase family 3 (KS3) domain. Residues Cys-167, His-307, and His-344 each act as for beta-ketoacyl synthase activity in the active site.

It belongs to the thiolase-like superfamily. Beta-ketoacyl-ACP synthases family. In terms of assembly, homodimer.

The catalysed reaction is a fatty acyl-[ACP] + malonyl-[ACP] + H(+) = a 3-oxoacyl-[ACP] + holo-[ACP] + CO2. It carries out the reaction (9Z)-hexadecenoyl-[ACP] + malonyl-[ACP] + H(+) = 3-oxo-(11Z)-octadecenoyl-[ACP] + holo-[ACP] + CO2. It participates in lipid metabolism; fatty acid biosynthesis. Functionally, involved in the type II fatty acid elongation cycle. Catalyzes the elongation of a wide range of acyl-ACP by the addition of two carbons from malonyl-ACP to an acyl acceptor. Can efficiently catalyze the conversion of palmitoleoyl-ACP (cis-hexadec-9-enoyl-ACP) to cis-vaccenoyl-ACP (cis-octadec-11-enoyl-ACP), an essential step in the thermal regulation of fatty acid composition. This Synechocystis sp. (strain ATCC 27184 / PCC 6803 / Kazusa) protein is 3-oxoacyl-[acyl-carrier-protein] synthase 2 (fabF).